The primary structure comprises 151 residues: MLP-like protein 168 (151 aa).

Belongs to the MLP family.

The chain is MLP-like protein 168 (MLP168) from Arabidopsis thaliana (Mouse-ear cress).